We begin with the raw amino-acid sequence, 396 residues long: Flavohemoprotein (396 aa).

Residues 1-136 (MLDAQTIATV…LANVFIHREA (136 aa)) form the Globin domain. His85 serves as a coordination point for heme b. Residues Tyr95 and Glu135 each act as charge relay system in the active site. Residues 147–396 (GGWEGTRPFR…YECFGPHKVL (250 aa)) form a reductase region. Positions 150–255 (EGTRPFRIVA…AAPAGDFFMN (106 aa)) constitute an FAD-binding FR-type domain. Residues Tyr188 and 204 to 207 (RQYS) contribute to the FAD site. NADP(+) is bound at residue 268–273 (GVGQTP). An FAD-binding site is contributed by 389 to 392 (CFGP).

The protein belongs to the globin family. Two-domain flavohemoproteins subfamily. This sequence in the C-terminal section; belongs to the flavoprotein pyridine nucleotide cytochrome reductase family. Requires heme b as cofactor. The cofactor is FAD.

It catalyses the reaction 2 nitric oxide + NADPH + 2 O2 = 2 nitrate + NADP(+) + H(+). It carries out the reaction 2 nitric oxide + NADH + 2 O2 = 2 nitrate + NAD(+) + H(+). Its function is as follows. Is involved in NO detoxification in an aerobic process, termed nitric oxide dioxygenase (NOD) reaction that utilizes O(2) and NAD(P)H to convert NO to nitrate, which protects the bacterium from various noxious nitrogen compounds. Therefore, plays a central role in the inducible response to nitrosative stress. The chain is Flavohemoprotein from Salmonella typhi.